The primary structure comprises 371 residues: D-alanine--D-alanine ligase (371 aa).

An ATP-grasp domain is found at 154–361; the sequence is KKLLVAEGLP…YPTLLAAMVD (208 aa). An ATP-binding site is contributed by 182–237; the sequence is RERLGLPVFVKPARGGSSIGVSRVSDWAELPAAIEAARRHDPKVIVEAGIAGRELE. Mg(2+)-binding residues include aspartate 316, glutamate 328, and asparagine 330.

It belongs to the D-alanine--D-alanine ligase family. It depends on Mg(2+) as a cofactor. Mn(2+) serves as cofactor.

Its subcellular location is the cytoplasm. The catalysed reaction is 2 D-alanine + ATP = D-alanyl-D-alanine + ADP + phosphate + H(+). It functions in the pathway cell wall biogenesis; peptidoglycan biosynthesis. Cell wall formation. The polypeptide is D-alanine--D-alanine ligase (Mycobacterium sp. (strain JLS)).